The following is a 390-amino-acid chain: Succinyl-diaminopimelate desuccinylase (390 aa).

H74 provides a ligand contact to Zn(2+). The active site involves D76. D107 contacts Zn(2+). The Proton acceptor role is filled by E140. Zn(2+)-binding residues include E141, E169, and H363.

It belongs to the peptidase M20A family. DapE subfamily. In terms of assembly, homodimer. Zn(2+) serves as cofactor. The cofactor is Co(2+).

The enzyme catalyses N-succinyl-(2S,6S)-2,6-diaminopimelate + H2O = (2S,6S)-2,6-diaminopimelate + succinate. The protein operates within amino-acid biosynthesis; L-lysine biosynthesis via DAP pathway; LL-2,6-diaminopimelate from (S)-tetrahydrodipicolinate (succinylase route): step 3/3. Catalyzes the hydrolysis of N-succinyl-L,L-diaminopimelic acid (SDAP), forming succinate and LL-2,6-diaminopimelate (DAP), an intermediate involved in the bacterial biosynthesis of lysine and meso-diaminopimelic acid, an essential component of bacterial cell walls. The polypeptide is Succinyl-diaminopimelate desuccinylase (Bartonella henselae (strain ATCC 49882 / DSM 28221 / CCUG 30454 / Houston 1) (Rochalimaea henselae)).